The primary structure comprises 175 residues: Nascent polypeptide-associated complex subunit beta (175 aa).

2 disordered regions span residues 1–36 and 129–175; these read MDKE…SQGD and RQAA…EELE. An NAC-A/B domain is found at 34–101; it reads QGDDRKLQAA…GQTKELTELV (68 aa). The span at 149–163 shows a compositional bias: acidic residues; it reads EGDDEIPDLVDNFDE. The span at 164-175 shows a compositional bias: basic and acidic residues; sequence AEVKKSDLEELE.

It belongs to the NAC-beta family. In terms of assembly, part of the nascent polypeptide-associated complex (NAC), consisting of EGD2 and EGD1. NAC associates with ribosomes via EGD1.

It is found in the cytoplasm. The protein resides in the nucleus. In terms of biological role, component of the nascent polypeptide-associated complex (NAC), a dynamic component of the ribosomal exit tunnel, protecting the emerging polypeptides from interaction with other cytoplasmic proteins to ensure appropriate nascent protein targeting. The NAC complex also promotes mitochondrial protein import by enhancing productive ribosome interactions with the outer mitochondrial membrane and blocks the inappropriate interaction of ribosomes translating non-secretory nascent polypeptides with translocation sites in the membrane of the endoplasmic reticulum. EGD1 may act as a transcription factor that exert a negative effect on the expression of several genes that are transcribed by RNA polymerase II. In Cryptococcus neoformans var. neoformans serotype D (strain B-3501A) (Filobasidiella neoformans), this protein is Nascent polypeptide-associated complex subunit beta (EGD1).